The chain runs to 189 residues: GTP cyclohydrolase 1 (189 aa).

Positions 78, 81, and 150 each coordinate Zn(2+).

This sequence belongs to the GTP cyclohydrolase I family. As to quaternary structure, homomer.

It catalyses the reaction GTP + H2O = 7,8-dihydroneopterin 3'-triphosphate + formate + H(+). It functions in the pathway cofactor biosynthesis; 7,8-dihydroneopterin triphosphate biosynthesis; 7,8-dihydroneopterin triphosphate from GTP: step 1/1. In Bacillus cytotoxicus (strain DSM 22905 / CIP 110041 / 391-98 / NVH 391-98), this protein is GTP cyclohydrolase 1.